A 282-amino-acid polypeptide reads, in one-letter code: L-allo-isoleucyltransferase (282 aa).

The active-site Acyl-thioester intermediate is the Cys-105. The 93-residue stretch at 169–261 (HTQSTYTPSD…DGQHHDFVDG (93 aa)) folds into the AB hydrolase-1 domain.

Belongs to the AB hydrolase superfamily.

The enzyme catalyses holo-[CmaD peptidyl-carrier protein] + L-alloisoleucyl-[CmaA peptidyl-carrier protein] = L-alloisoleucyl-[CmaD peptidyl-carrier protein] + holo-[CmaA peptidyl-carrier protein]. Its function is as follows. Involved in the biosynthesis of the phytotoxin coronatine (COR). Catalyzes the transfer of the aminoacyl group covalently attached to the pantetheinyl arm of CmaA to the holo-pantetheinyl arm of CmaD. During the shuttling process, CmaE generates a covalent-aminoacyl-S-Cys enzyme intermediate by the action of its donor substrate L-aminoacyl-S-CmaA and delivers it to the sulfhydryl group attached to the phosphopantetheinyl arm on CmaD. In Pseudomonas savastanoi pv. glycinea (Pseudomonas syringae pv. glycinea), this protein is L-allo-isoleucyltransferase.